The sequence spans 79 residues: Small ribosomal subunit protein bS18 (79 aa).

This sequence belongs to the bacterial ribosomal protein bS18 family. Part of the 30S ribosomal subunit. Forms a tight heterodimer with protein bS6.

In terms of biological role, binds as a heterodimer with protein bS6 to the central domain of the 16S rRNA, where it helps stabilize the platform of the 30S subunit. This is Small ribosomal subunit protein bS18 from Bacillus velezensis (strain DSM 23117 / BGSC 10A6 / LMG 26770 / FZB42) (Bacillus amyloliquefaciens subsp. plantarum).